A 200-amino-acid chain; its full sequence is MSKFLQQKPIILASSSTIRHKLMKSLGLDFLVLPSNCNEEEIKTRHKSDELVELGITLAKIKALDVSQHYPEHYIIAADQLCVAGKRVFNKPLNHQTAVSHLRELSGKQHQQIACLCIVKESKILWQYHETATLTLHHLSEKTIEAYLQAEKPYQSCGAYQYEGLGKWLFKEVQGSEDTILGLPLMPLVNALVNLKVVGI.

The Proton acceptor role is filled by Asp-79.

This sequence belongs to the Maf family. A divalent metal cation is required as a cofactor.

The protein resides in the cytoplasm. It carries out the reaction a ribonucleoside 5'-triphosphate + H2O = a ribonucleoside 5'-phosphate + diphosphate + H(+). The catalysed reaction is a 2'-deoxyribonucleoside 5'-triphosphate + H2O = a 2'-deoxyribonucleoside 5'-phosphate + diphosphate + H(+). In terms of biological role, nucleoside triphosphate pyrophosphatase. May have a dual role in cell division arrest and in preventing the incorporation of modified nucleotides into cellular nucleic acids. In Legionella pneumophila (strain Corby), this protein is Nucleoside triphosphate pyrophosphatase.